The sequence spans 647 residues: XK-related protein 4 (647 aa).

Basic and acidic residues predominate over residues 1–15 (MAAKSDGRLKMKKSS). The segment at 1-44 (MAAKSDGRLKMKKSSDVAFTPLQNSDNSGSVQGLAPGLPSGSGA) is disordered. The segment covering 21 to 31 (PLQNSDNSGSV) has biased composition (polar residues). A run of 2 helical transmembrane segments spans residues 112 to 132 (WILA…WLAV) and 142 to 162 (WFGL…VFSF). Position 197 is a phosphoserine (Ser197). Positions 197–238 (SAAGEGEVRPSTPQRQASNASKSNIAATNSGSNSNGATRTSG) are disordered. Residues 207 to 236 (STPQRQASNASKSNIAATNSGSNSNGATRT) show a composition bias toward polar residues. 8 helical membrane passes run 245-265 (CSFC…GQIW), 303-323 (HLLA…CIIV), 328-348 (LQAL…WALA), 362-382 (KPIS…TIAA), 393-415 (VFQL…WIVH), 425-445 (WEEI…WFNV), 454-474 (LFIY…LWYL), and 484-504 (FAIP…VFML).

Belongs to the XK family. Homodimer; homodimerization takes place upon caspase cleavage. Interacts with the processed C-terminus of XRCC4 (protein XRCC4, C-terminus); interaction promotes the phospholipid scramblase activity. Post-translationally, undergoes proteolytic processing by caspase-3 (CASP3), caspase-6 (CASP6) and caspase-7 (CASP7) to generate the XK-related protein 4, processed form, leading to its activation. As to expression, highly expressed in expressed in the brain; weakly expressed in the spleen, thymus, uterus, blood vessels and fetus.

The protein resides in the cell membrane. The enzyme catalyses a 1,2-diacyl-sn-glycero-3-phospho-L-serine(in) = a 1,2-diacyl-sn-glycero-3-phospho-L-serine(out). Phospholipid scramblase activity is activated upon caspase cleavage to generate the XK-related protein 4, processed form. Does not act prior the onset of apoptosis. Its activity is regulated as follows. Homodimerizes upon caspase cleavage. Phospholipid scramblase activity is activated following interaction with the processed C-terminus of XRCC4 (protein XRCC4, C-terminus). Its function is as follows. Phospholipid scramblase that promotes phosphatidylserine exposure on apoptotic cell surface. Phosphatidylserine is a specific marker only present at the surface of apoptotic cells and acts as a specific signal for engulfment. The sequence is that of XK-related protein 4 from Mus musculus (Mouse).